The following is a 186-amino-acid chain: Imidazoleglycerol-phosphate dehydratase (186 aa).

This sequence belongs to the imidazoleglycerol-phosphate dehydratase family.

It localises to the cytoplasm. The catalysed reaction is D-erythro-1-(imidazol-4-yl)glycerol 3-phosphate = 3-(imidazol-4-yl)-2-oxopropyl phosphate + H2O. Its pathway is amino-acid biosynthesis; L-histidine biosynthesis; L-histidine from 5-phospho-alpha-D-ribose 1-diphosphate: step 6/9. The chain is Imidazoleglycerol-phosphate dehydratase from Dictyoglomus thermophilum (strain ATCC 35947 / DSM 3960 / H-6-12).